Here is a 138-residue protein sequence, read N- to C-terminus: Dual specificity phosphatase ibp1 (138 aa).

A Rhodanese domain is found at 19-133 (SPNEISIIDV…WKRRYGGQQG (115 aa)). The Phosphocysteine intermediate role is filled by C70.

It belongs to the MPI phosphatase family.

The protein localises to the cytoplasm. The protein resides in the nucleus. It catalyses the reaction O-phospho-L-tyrosyl-[protein] + H2O = L-tyrosyl-[protein] + phosphate. In terms of biological role, may play a role in DNA replication checkpoint via regulation of hsk1 or may act downstream of hsk1 in an S phase regulatory pathway. The polypeptide is Dual specificity phosphatase ibp1 (ibp1) (Schizosaccharomyces pombe (strain 972 / ATCC 24843) (Fission yeast)).